Here is a 303-residue protein sequence, read N- to C-terminus: MENKKESSLLYILTGATSGLLADSIMHPVDTVRARVQIEKVGKSQYKGTFNALNQIIKNEGVSYLYKGFPIVATATVPAHALYFLGYEYSKQWVTDRYGKKWGESTITHFSAGFVADALGSLIWVPMDIIKQRLQVQTNTQKLNPNQTYYKGSFHAGKIILQEEGIRGLYRGFMPALATYGPFVGIYFSVYEKCKSTISSLLSKEKDQYLPIPYQLGSGFFAGAFAAAVTCPLDVIKTRIQVQRSTEKQIYKGMWDSFKTILKEEGPKAFVKGMGARIWWIAPGNALTIASYEQLKYLFKDLI.

Over 1-8 (MENKKESS) the chain is Mitochondrial intermembrane. Solcar repeat units lie at residues 6-93 (ESSL…SKQW), 104-197 (ESTI…CKST), and 210-298 (LPIP…LKYL). The chain crosses the membrane as a helical span at residues 9–29 (LLYILTGATSGLLADSIMHPV). Residues 30-67 (DTVRARVQIEKVGKSQYKGTFNALNQIIKNEGVSYLYK) are Mitochondrial matrix-facing. Residues 68 to 88 (GFPIVATATVPAHALYFLGYE) traverse the membrane as a helical segment. Over 89 to 109 (YSKQWVTDRYGKKWGESTITH) the chain is Mitochondrial intermembrane. The chain crosses the membrane as a helical span at residues 110 to 130 (FSAGFVADALGSLIWVPMDII). Over 131–171 (KQRLQVQTNTQKLNPNQTYYKGSFHAGKIILQEEGIRGLYR) the chain is Mitochondrial matrix. Residues 172 to 192 (GFMPALATYGPFVGIYFSVYE) form a helical membrane-spanning segment. Residues 193 to 215 (KCKSTISSLLSKEKDQYLPIPYQ) lie on the Mitochondrial intermembrane side of the membrane. Residues 216-236 (LGSGFFAGAFAAAVTCPLDVI) form a helical membrane-spanning segment. At 237 to 268 (KTRIQVQRSTEKQIYKGMWDSFKTILKEEGPK) the chain is on the mitochondrial matrix side. The chain crosses the membrane as a helical span at residues 269–289 (AFVKGMGARIWWIAPGNALTI). At 290-303 (ASYEQLKYLFKDLI) the chain is on the mitochondrial intermembrane side.

This sequence belongs to the mitochondrial carrier (TC 2.A.29) family.

It localises to the mitochondrion inner membrane. Mitochondrial solute carriers shuttle metabolites, nucleotides, and cofactors through the mitochondrial inner membrane. This chain is Mitochondrial substrate carrier family protein E (mcfE), found in Dictyostelium discoideum (Social amoeba).